Consider the following 112-residue polypeptide: MEARAIARYVRISPRKARLVLNLIRGKHVDEALAILKFTPKKASKIVEKVLKSAIANAENNHNMNRDNLYVAKAVADEGPTMKRVLPRAMGRADIMRRRTSHITIVVKEKEE.

The protein belongs to the universal ribosomal protein uL22 family. As to quaternary structure, part of the 50S ribosomal subunit.

Functionally, this protein binds specifically to 23S rRNA; its binding is stimulated by other ribosomal proteins, e.g. L4, L17, and L20. It is important during the early stages of 50S assembly. It makes multiple contacts with different domains of the 23S rRNA in the assembled 50S subunit and ribosome. In terms of biological role, the globular domain of the protein is located near the polypeptide exit tunnel on the outside of the subunit, while an extended beta-hairpin is found that lines the wall of the exit tunnel in the center of the 70S ribosome. The chain is Large ribosomal subunit protein uL22 from Caldanaerobacter subterraneus subsp. tengcongensis (strain DSM 15242 / JCM 11007 / NBRC 100824 / MB4) (Thermoanaerobacter tengcongensis).